A 139-amino-acid polypeptide reads, in one-letter code: GATA transcription factor 16 (139 aa).

A GATA-type zinc finger spans residues 32-86; it reads NDKKKTCADCGTSKTPLWRGGPVGPKSLCNACGIRNRKKRRGGTEDNKKLKKSSS. A disordered region spans residues 67 to 98; sequence NRKKRRGGTEDNKKLKKSSSGGGNRKFGESLK.

Belongs to the type IV zinc-finger family. Class B subfamily.

Its subcellular location is the nucleus. Functionally, transcriptional regulator that specifically binds 5'-GATA-3' or 5'-GAT-3' motifs within gene promoters. In Arabidopsis thaliana (Mouse-ear cress), this protein is GATA transcription factor 16 (GATA16).